A 535-amino-acid chain; its full sequence is MTKYIFVTGGVVSSLGKGITAASLGRLLKNRGLNVTIQKFDPYINVDPGTMSPYQHGEVFVTDDGAETDLDLGHYERFIDINLNKYSNVTTGKIYSSVLQKERRGEYLGGTVQVIPHITNEIKERVYRSGRETNADVVITEIGGTVGDIESLPFLEAIRQIKSDIGRDNVMYIHCTLIPYLKAAGEMKTKPTQHSVKELRSLGIQPNIIVVRTEMPVSQDMKDKLALFCDIDTKAVIEARDADTLYAVPLSLQEQNMDQIVCDHLKLDNPAADMTEWTALVEKVRNLSKKTKIALVGKYVELQDAYISVVEALRHAGYSFDTDVEVKWVNAEHVTAENVQELVGDTDGILVPGGFGDRGVEGKIVAIQYARENKVPFLGICLGMQLASIEFARNVLGLEGANSSEINPDTPYAIIDLLPEQKDVEDLGGTLRLGLYPCKLSEETNAYNAYNEPVVYERHRHRYEFNNQFRPDMEKEGFVFSGTSPDGRLVEIIELKDHPWFVAAQFHPELVSRPNRPQPLFHDFVKASITNKESK.

Residues 1 to 267 (MTKYIFVTGG…DQIVCDHLKL (267 aa)) are amidoligase domain. CTP is bound at residue Ser13. Ser13 serves as a coordination point for UTP. Residue 14-19 (SLGKGI) coordinates ATP. Tyr54 serves as a coordination point for L-glutamine. Asp71 contributes to the ATP binding site. The Mg(2+) site is built by Asp71 and Glu141. CTP-binding positions include 148 to 150 (DIE), 188 to 193 (KTKPTQ), and Lys224. UTP contacts are provided by residues 188 to 193 (KTKPTQ) and Lys224. Residue 240 to 242 (RDA) participates in ATP binding. Residues 292–534 (KIALVGKYVE…VKASITNKES (243 aa)) enclose the Glutamine amidotransferase type-1 domain. Gly354 contacts L-glutamine. Catalysis depends on Cys381, which acts as the Nucleophile; for glutamine hydrolysis. L-glutamine-binding positions include 382–385 (LGMQ), Glu405, and Arg462. Catalysis depends on residues His507 and Glu509.

This sequence belongs to the CTP synthase family. As to quaternary structure, homotetramer.

The catalysed reaction is UTP + L-glutamine + ATP + H2O = CTP + L-glutamate + ADP + phosphate + 2 H(+). The enzyme catalyses L-glutamine + H2O = L-glutamate + NH4(+). It carries out the reaction UTP + NH4(+) + ATP = CTP + ADP + phosphate + 2 H(+). It functions in the pathway pyrimidine metabolism; CTP biosynthesis via de novo pathway; CTP from UDP: step 2/2. Allosterically activated by GTP, when glutamine is the substrate; GTP has no effect on the reaction when ammonia is the substrate. The allosteric effector GTP functions by stabilizing the protein conformation that binds the tetrahedral intermediate(s) formed during glutamine hydrolysis. Inhibited by the product CTP, via allosteric rather than competitive inhibition. Its function is as follows. Catalyzes the ATP-dependent amination of UTP to CTP with either L-glutamine or ammonia as the source of nitrogen. Regulates intracellular CTP levels through interactions with the four ribonucleotide triphosphates. In Bacillus thuringiensis subsp. konkukian (strain 97-27), this protein is CTP synthase.